Reading from the N-terminus, the 1684-residue chain is Latrophilin Cirl (1684 aa).

At M1–R765 the chain is on the extracellular side. Positions A21–V110 constitute an SUEL-type lectin domain. Residues N138, N251, N297, and N336 are each glycosylated (N-linked (GlcNAc...) asparagine). The interval P181 to A300 is disordered. Polar residues-rich tracts occupy residues S250–I260 and K278–A300. Residues S370–S391 are disordered. The span at T381 to S391 shows a compositional bias: low complexity. Residues N396, N653, N701, and N728 are each glycosylated (N-linked (GlcNAc...) asparagine). In terms of domain architecture, GAIN-B spans R559–H752. Intrachain disulfides connect C707–C734 and C722–C736. A GPS region spans residues C707–H752. Residues I766–L786 traverse the membrane as a helical segment. Over K787–T799 the chain is Cytoplasmic. A helical membrane pass occupies residues S800–I820. The Extracellular segment spans residues E821–S826. The chain crosses the membrane as a helical span at residues I827–F847. The Cytoplasmic segment spans residues C848–V873. A helical transmembrane segment spans residues N874–I894. The Extracellular portion of the chain corresponds to N895–F918. A helical transmembrane segment spans residues V919–I939. Residues M940–S966 are Cytoplasmic-facing. Residues F967–A987 traverse the membrane as a helical segment. Over K988–T994 the chain is Extracellular. Residues G995–F1015 form a helical membrane-spanning segment. At H1016–K1684 the chain is on the cytoplasmic side. A disordered region spans residues P1080–T1100. A phosphoserine mark is found at S1156, S1247, and S1254. 4 disordered regions span residues K1228–R1255, K1270–P1353, S1441–Q1520, and S1587–L1669. The segment covering Q1298–L1314 has biased composition (low complexity). S1315 and S1316 each carry phosphoserine. The span at L1328–L1348 shows a compositional bias: low complexity. Polar residues predominate over residues R1455–Q1466. 2 stretches are compositionally biased toward acidic residues: residues D1476–T1489 and C1499–D1512. A compositionally biased stretch (low complexity) spans Q1631–H1654.

The protein belongs to the G-protein coupled receptor 2 family. LN-TM7 subfamily. As to quaternary structure, forms a heterodimer, consisting of a large extracellular region non-covalently linked to a seven-transmembrane moiety. Post-translationally, proteolytically cleaved into 2 subunits, an extracellular subunit and a seven-transmembrane subunit.

It localises to the cell membrane. The sequence is that of Latrophilin Cirl from Drosophila persimilis (Fruit fly).